The chain runs to 1368 residues: DNA-directed RNA polymerase subunit beta (1368 aa).

The protein belongs to the RNA polymerase beta chain family. As to quaternary structure, the RNAP catalytic core consists of 2 alpha, 1 beta, 1 beta' and 1 omega subunit. When a sigma factor is associated with the core the holoenzyme is formed, which can initiate transcription.

It carries out the reaction RNA(n) + a ribonucleoside 5'-triphosphate = RNA(n+1) + diphosphate. Its function is as follows. DNA-dependent RNA polymerase catalyzes the transcription of DNA into RNA using the four ribonucleoside triphosphates as substrates. In Cupriavidus necator (strain ATCC 17699 / DSM 428 / KCTC 22496 / NCIMB 10442 / H16 / Stanier 337) (Ralstonia eutropha), this protein is DNA-directed RNA polymerase subunit beta.